The following is a 341-amino-acid chain: Glycerol-3-phosphate dehydrogenase [NAD(P)+] (341 aa).

Residues S11, W12, R33, and K106 each coordinate NADPH. Sn-glycerol 3-phosphate-binding residues include K106, G137, and S139. NADPH is bound at residue A141. K192, D245, S255, R256, and N257 together coordinate sn-glycerol 3-phosphate. K192 serves as the catalytic Proton acceptor. R256 lines the NADPH pocket. NADPH is bound by residues V280 and E282.

The protein belongs to the NAD-dependent glycerol-3-phosphate dehydrogenase family.

The protein localises to the cytoplasm. The catalysed reaction is sn-glycerol 3-phosphate + NAD(+) = dihydroxyacetone phosphate + NADH + H(+). It carries out the reaction sn-glycerol 3-phosphate + NADP(+) = dihydroxyacetone phosphate + NADPH + H(+). Its pathway is membrane lipid metabolism; glycerophospholipid metabolism. Catalyzes the reduction of the glycolytic intermediate dihydroxyacetone phosphate (DHAP) to sn-glycerol 3-phosphate (G3P), the key precursor for phospholipid synthesis. In Bacillus cytotoxicus (strain DSM 22905 / CIP 110041 / 391-98 / NVH 391-98), this protein is Glycerol-3-phosphate dehydrogenase [NAD(P)+].